The primary structure comprises 329 residues: GTP 3',8-cyclase (329 aa).

The 227-residue stretch at A8–A234 folds into the Radical SAM core domain. Residue R17 participates in GTP binding. [4Fe-4S] cluster-binding residues include C24 and C28. Position 30 (Y30) interacts with S-adenosyl-L-methionine. C31 lines the [4Fe-4S] cluster pocket. A GTP-binding site is contributed by R68. G72 is an S-adenosyl-L-methionine binding site. T99 serves as a coordination point for GTP. An S-adenosyl-L-methionine-binding site is contributed by S123. GTP is bound at residue K160. Residue M194 coordinates S-adenosyl-L-methionine. Residues C257 and C260 each contribute to the [4Fe-4S] cluster site. R262 to R264 serves as a coordination point for GTP. [4Fe-4S] cluster is bound at residue C274.

This sequence belongs to the radical SAM superfamily. MoaA family. Monomer and homodimer. It depends on [4Fe-4S] cluster as a cofactor.

The catalysed reaction is GTP + AH2 + S-adenosyl-L-methionine = (8S)-3',8-cyclo-7,8-dihydroguanosine 5'-triphosphate + 5'-deoxyadenosine + L-methionine + A + H(+). The protein operates within cofactor biosynthesis; molybdopterin biosynthesis. Functionally, catalyzes the cyclization of GTP to (8S)-3',8-cyclo-7,8-dihydroguanosine 5'-triphosphate. The polypeptide is GTP 3',8-cyclase (Shigella dysenteriae serotype 1 (strain Sd197)).